Reading from the N-terminus, the 612-residue chain is Apoptosis-inducing factor 1, mitochondrial (612 aa).

Short sequence motifs (mitochondrial localization signal) lie at residues 1-30 and 62-88; these read MFRC…PKQR and KMDN…KTIK. Residues 1-53 constitute a mitochondrion transit peptide; that stretch reads MFRCGGLAGAFKQKLVPLVRSVCVQRPKQRNRLPGNLFQQWRVPLELQMARQM. Propeptides (removed in mature form) lie at residues 54-100 and 55-101; these read ASSG…RIMG and SSGP…IMGL. Position 108 is an N6-succinyllysine (Lys108). Ser115 carries the post-translational modification Phosphoserine. Residues 133-482 are FAD-dependent oxidoreductase; it reads FLLIGGGTAA…KPYWHQSMFW (350 aa). FAD-binding positions include 137-141, 163-164, Arg171, and Lys176; these read GGGTA and ED. Trp195 contributes to the NAD(+) binding site. An FAD-binding site is contributed by Val232. Residue Lys254 forms a Glycyl lysine isopeptide (Lys-Gly) (interchain with G-Cter in ubiquitin) linkage. Ser267 is subject to Phosphoserine. Arg284 lines the FAD pocket. Residues 307 to 310, Glu335, and Lys341 contribute to the NAD(+) site; that span reads GGFL. A Phosphoserine modification is found at Ser370. Lys387 carries the post-translational modification N6-acetyllysine. Gly398 serves as a coordination point for NAD(+). Asp437 is an FAD binding site. The Nuclear localization signal motif lies at 445–450; the sequence is KLGRRR. NAD(+)-binding positions include 452 to 453, Trp482, and Glu492; that span reads EH. FAD is bound by residues 453 to 454 and Trp482; that span reads HH. A compositionally biased stretch (polar residues) spans 512–528; sequence AQDNPKSATEQSGTGIR. The segment at 512–551 is disordered; the sequence is AQDNPKSATEQSGTGIRSESETESEASEITIPPSDPAVPQ. Position 520 is a phosphothreonine (Thr520). A phosphoserine mark is found at Ser523 and Ser529. Residue Asn582 participates in NAD(+) binding. Position 592 is an N6-acetyllysine (Lys592).

It belongs to the FAD-dependent oxidoreductase family. Monomer (oxidized form). Homodimer (reduced form). Upon reduction with NADH, undergoes dimerization and forms tight, long-lived FADH2-NAD charge transfer complexes (CTC) resistant to oxidation. Also dimerizes with isoform 3 preventing its release from mitochondria. Interacts with XIAP/BIRC4. Interacts (via N-terminus) with EIF3G (via C-terminus). Interacts with PRELID1. Interacts with CHCHD4; the interaction increases in presence of NADH. Interacts with processed form of PARP1 (Poly [ADP-ribose] polymerase 1, processed C-terminus); interaction is mediated with poly-ADP-ribose chains attached to PARP1, promoting translocation into the nucleus. FAD is required as a cofactor. In terms of processing, under normal conditions, a 54-residue N-terminal segment is first proteolytically removed during or just after translocation into the mitochondrial intermembrane space (IMS) by the mitochondrial processing peptidase (MPP) to form the inner-membrane-anchored mature form (AIFmit). During apoptosis, it is further proteolytically processed at amino-acid position 101 leading to the generation of the mature form, which is confined to the mitochondrial IMS in a soluble form (AIFsol). AIFsol is released to the cytoplasm in response to specific death signals, and translocated to the nucleus, where it induces nuclear apoptosis in a caspase-independent manner. Post-translationally, ubiquitination by XIAP/BIRC4 does not lead to proteasomal degradation. Ubiquitination at Lys-254 by XIAP/BIRC4 blocks its ability to bind DNA and induce chromatin degradation, thereby inhibiting its ability to induce cell death.

It is found in the mitochondrion intermembrane space. It localises to the mitochondrion inner membrane. Its subcellular location is the cytoplasm. The protein resides in the nucleus. The protein localises to the perinuclear region. It catalyses the reaction A + NADH + H(+) = AH2 + NAD(+). Functionally, functions both as NADH oxidoreductase and as regulator of apoptosis. In response to apoptotic stimuli, it is released from the mitochondrion intermembrane space into the cytosol and to the nucleus, where it functions as a proapoptotic factor in a caspase-independent pathway. Release into the cytoplasm is mediated upon binding to poly-ADP-ribose chains. The soluble form (AIFsol) found in the nucleus induces 'parthanatos' i.e. caspase-independent fragmentation of chromosomal DNA. Binds to DNA in a sequence-independent manner. Interacts with EIF3G, and thereby inhibits the EIF3 machinery and protein synthesis, and activates caspase-7 to amplify apoptosis. Plays a critical role in caspase-independent, pyknotic cell death in hydrogen peroxide-exposed cells. In contrast, participates in normal mitochondrial metabolism. Plays an important role in the regulation of respiratory chain biogenesis by interacting with CHCHD4 and controlling CHCHD4 mitochondrial import. This chain is Apoptosis-inducing factor 1, mitochondrial (Aifm1), found in Rattus norvegicus (Rat).